Consider the following 179-residue polypeptide: MNKSMLAGIGIGVAAALGVAAVASLNVFERGPQYAQVVSATPIKETVKTPRQECRNVTVTHRRPVQDENRITGSVLGAVAGGVIGHQFGGGRGKDVATVVGALGGGYAGNQIQGSLQESDTYTTTQQRCKTVYDKSEKMLGYDVTYKIGDQQGKIRMDRDPGTQIPLDSNGQLILNNKV.

The chain crosses the membrane as a helical span at residues 5–25; sequence MLAGIGIGVAAALGVAAVASL.

To Rickettsia 17 kDa surface antigen.

It localises to the membrane. This is an uncharacterized protein from Escherichia coli O6:H1 (strain CFT073 / ATCC 700928 / UPEC).